The chain runs to 274 residues: Penicillin-insensitive murein endopeptidase (274 aa).

Positions 1 to 19 are cleaved as a signal peptide; the sequence is MKKTAIALLAWFVSSASLA. Disulfide bonds link Cys-44-Cys-265, Cys-187-Cys-235, and Cys-216-Cys-223. Residues His-110, His-113, Asp-120, Asp-147, His-150, and His-211 each contribute to the Zn(2+) site. The interval 225 to 274 is disordered; it reads DQPLPPPGDGCGAELQSWFEPPKPGTTKPEKKTPPPLPPSCQALLDEHVL.

Belongs to the peptidase M74 family. In terms of assembly, dimer. Zn(2+) is required as a cofactor.

It localises to the periplasm. Murein endopeptidase that cleaves the D-alanyl-meso-2,6-diamino-pimelyl amide bond that connects peptidoglycan strands. Likely plays a role in the removal of murein from the sacculus. The chain is Penicillin-insensitive murein endopeptidase from Salmonella choleraesuis (strain SC-B67).